Consider the following 339-residue polypeptide: Uroporphyrinogen decarboxylase (339 aa).

Residues 21–25, Asp-71, Tyr-147, Ser-202, and His-315 each bind substrate; that span reads RQAGR.

This sequence belongs to the uroporphyrinogen decarboxylase family. As to quaternary structure, homodimer.

The protein localises to the cytoplasm. The catalysed reaction is uroporphyrinogen III + 4 H(+) = coproporphyrinogen III + 4 CO2. Its pathway is porphyrin-containing compound metabolism; protoporphyrin-IX biosynthesis; coproporphyrinogen-III from 5-aminolevulinate: step 4/4. Its function is as follows. Catalyzes the decarboxylation of four acetate groups of uroporphyrinogen-III to yield coproporphyrinogen-III. This Helicobacter pylori (strain P12) protein is Uroporphyrinogen decarboxylase.